Consider the following 147-residue polypeptide: Small ribosomal subunit protein uS12 (147 aa).

Belongs to the universal ribosomal protein uS12 family. Part of the 30S ribosomal subunit.

Its function is as follows. With S4 and S5 plays an important role in translational accuracy. Located at the interface of the 30S and 50S subunits. The protein is Small ribosomal subunit protein uS12 of Hyperthermus butylicus (strain DSM 5456 / JCM 9403 / PLM1-5).